Reading from the N-terminus, the 429-residue chain is MTAIAVVGSQWGDEGKGKITDFLSKEAAMAVRSNGGNNAGHTIEIGDKTFKMRLIPSGIFAAKKGAVIGNGVVINPEVMFGELDNLEKEGIDISGLKISNRAHIIMPYHILQDTYQEEAKGDKKIGTTKNGIGPCYMDKASRTGIRVCDLLERDTFEEKLRTNLAEKNALFTKVYGKPELKFEDIFEKYLEYGQKMKKYVTDTSVVVNDALDNDEKVLFEGAQGVMLDIDEGTYPYVTSSNTISGGIASGIGMGANRLDTVIGVCKAYTTRVGEGPFPTELLDEVGDRIRETAHEYGTVTGRPRRVGWFDSVALRHAKRVAGINALSLNLLDVFSGFDKIKIATAYELDGEKIDYYPASLKELYRCKPVYEELPAWEEDITNVKTWEDLPENAKKFLNRVSELVGVPLVTVSVGPDREQTIVLKNPWEK.

GTP is bound by residues 12-18 (GDEGKGK) and 40-42 (GHT). Residue Asp13 is the Proton acceptor of the active site. Mg(2+)-binding residues include Asp13 and Gly40. IMP is bound by residues 13–16 (DEGK), 38–41 (NAGH), Thr128, Arg142, Gln223, Thr238, and Arg302. His41 serves as the catalytic Proton donor. Position 298-304 (298-304 (TVTGRPR)) interacts with substrate. GTP contacts are provided by residues Arg304, 330–332 (LLD), and 412–414 (SVG).

Belongs to the adenylosuccinate synthetase family. As to quaternary structure, homodimer. Mg(2+) is required as a cofactor.

It is found in the cytoplasm. The enzyme catalyses IMP + L-aspartate + GTP = N(6)-(1,2-dicarboxyethyl)-AMP + GDP + phosphate + 2 H(+). Its pathway is purine metabolism; AMP biosynthesis via de novo pathway; AMP from IMP: step 1/2. In terms of biological role, plays an important role in the de novo pathway of purine nucleotide biosynthesis. Catalyzes the first committed step in the biosynthesis of AMP from IMP. The polypeptide is Adenylosuccinate synthetase (Lactobacillus johnsonii (strain CNCM I-12250 / La1 / NCC 533)).